A 139-amino-acid chain; its full sequence is Protein archease (139 aa).

Residues D12, D138, and I139 each coordinate Ca(2+).

This sequence belongs to the archease family.

Functionally, activates the tRNA-splicing ligase complex by facilitating the enzymatic turnover of catalytic subunit RtcB. Acts by promoting the guanylylation of RtcB, a key intermediate step in tRNA ligation. Can also alter the NTP specificity of RtcB such that ATP, dGTP or ITP is used efficiently. In Sulfurisphaera tokodaii (strain DSM 16993 / JCM 10545 / NBRC 100140 / 7) (Sulfolobus tokodaii), this protein is Protein archease.